We begin with the raw amino-acid sequence, 623 residues long: Glutamine--fructose-6-phosphate aminotransferase [isomerizing] (623 aa).

The active-site Nucleophile; for GATase activity is the Cys-2. The 227-residue stretch at 2-228 folds into the Glutamine amidotransferase type-2 domain; that stretch reads CGIVGYIGQA…NDQVVTITAD (227 aa). SIS domains are found at residues 295 to 435 and 468 to 613; these read IDEA…LRGN and LGQD…VDQP. Lys-618 functions as the For Fru-6P isomerization activity in the catalytic mechanism.

As to quaternary structure, homodimer.

It is found in the cytoplasm. The enzyme catalyses D-fructose 6-phosphate + L-glutamine = D-glucosamine 6-phosphate + L-glutamate. Catalyzes the first step in hexosamine metabolism, converting fructose-6P into glucosamine-6P using glutamine as a nitrogen source. This chain is Glutamine--fructose-6-phosphate aminotransferase [isomerizing], found in Corynebacterium glutamicum (strain ATCC 13032 / DSM 20300 / JCM 1318 / BCRC 11384 / CCUG 27702 / LMG 3730 / NBRC 12168 / NCIMB 10025 / NRRL B-2784 / 534).